The sequence spans 619 residues: MIIVTSGHVDHGKTALLKALTGTSTAHLPEEKKRGMTIDLGYAYLPLENKVLGFIDVPGHEKFLSNMLAGLGGVHYAMLIVAADEGVAVQTKEHLAILRQLQFHEIIVVITKADRTNSAQIESLIQTIKQDYSFLRNANYFVTSAETGQGISELRHYLANLAELADTQKPFRYAIDRVFSVKGAGTVVTGTAFSGTVKVNDEIYLSTGQKIRIKAIHAQNTSSEQGIAGQRLALNLNADLDRTPMKRGDWLLQNEPLPPTDRISVQILAEVPLNESQPVHIYHGASRTTGKLTLLQGKNAAKNDRTLAEIILDSPLFLAFGDKLILRSGDTKTLIAGARVLEINSPKRHKRTEVRLNFLANLALAENASQRIALTLQHNATTARQLMWTEQLTSLQLDKALAERDAVRYQDWCFNPNYVQEKTQQILTALNIYHEQHNDQLGVSKARLYRMATLNQPENLIHHFIDEMLDDGRLQQTRGWIHLPEHKIQFNTEEKSRWTDVLNEFEKANGQAIWVRDMANALAIDESIMRNFMYKAGKLGYLTPIVKDRFFLTETLYAYARLIKQIAEEKGKVSVNEVRDKLNFGRKLTVQLMEYFDRMGFLRRKGNDHILRDKNVFDL.

The region spanning 1–169 is the tr-type G domain; the sequence is MIIVTSGHVD…NLAELADTQK (169 aa). The segment at 7 to 14 is G1; that stretch reads GHVDHGKT. 7–14 is a GTP binding site; the sequence is GHVDHGKT. The G2 stretch occupies residues 35–39; sequence GMTID. The tract at residues 56–59 is G3; the sequence is DVPG. Residues 56 to 60 and 111 to 114 contribute to the GTP site; these read DVPGH and TKAD. The G4 stretch occupies residues 111–114; sequence TKAD. The tract at residues 144–146 is G5; the sequence is SAE.

This sequence belongs to the TRAFAC class translation factor GTPase superfamily. Classic translation factor GTPase family. SelB subfamily.

It localises to the cytoplasm. Translation factor necessary for the incorporation of selenocysteine into proteins. It probably replaces EF-Tu for the insertion of selenocysteine directed by the UGA codon. SelB binds GTP and GDP. The chain is Selenocysteine-specific elongation factor (selB) from Haemophilus influenzae (strain ATCC 51907 / DSM 11121 / KW20 / Rd).